Here is an 816-residue protein sequence, read N- to C-terminus: DNA helicase MCM8 (816 aa).

The interval 1–52 is disordered; it reads MNGKYRGRGFGQGRFQSWKSGRGGRGFSGKWREREHRPDLNKATGKHPEQTP. A compositionally biased stretch (basic and acidic residues) spans 30 to 40; that stretch reads KWREREHRPDL. The 208-residue stretch at 378 to 585 folds into the MCM domain; sequence LFKLIVNSLC…DHDHLLSEHV (208 aa). 430–437 lines the ATP pocket; it reads GDPGLGKS. S606 is modified (phosphoserine).

The protein belongs to the MCM family. As to quaternary structure, component of the MCM8-MCM9 complex, which forms a hexamer composed of MCM8 and MCM9. Interacts with the DNA mismatch repair (MMR) complex composed at least of MSH2, MSH3, MSH6, PMS1 and MLH1. Interacts with RAD51; the interaction recruits RAD51 to DNA damage sites. Interacts with the MRN complex composed of MRE11, RAD50 and NBN/NBS1. Interacts with CDC6 and ORC2. Interacts with HROB; the interaction recruits the MCM8-MCM9 complex to DNA damage sites.

Its subcellular location is the nucleus. The protein resides in the chromosome. The enzyme catalyses ATP + H2O = ADP + phosphate + H(+). In terms of biological role, component of the MCM8-MCM9 complex, a complex involved in the repair of double-stranded DNA breaks (DBSs) and DNA interstrand cross-links (ICLs) by homologous recombination (HR). Required for DNA resection by the MRE11-RAD50-NBN/NBS1 (MRN) complex by recruiting the MRN complex to the repair site and by promoting the complex nuclease activity. Probably by regulating the localization of the MNR complex, indirectly regulates the recruitment of downstream effector RAD51 to DNA damage sites including DBSs and ICLs. The MCM8-MCM9 complex is dispensable for DNA replication and S phase progression. However, may play a non-essential for DNA replication: may be involved in the activation of the prereplicative complex (pre-RC) during G(1) phase by recruiting CDC6 to the origin recognition complex (ORC). Probably by regulating HR, plays a key role during gametogenesis. Stabilizes MCM9 protein. This chain is DNA helicase MCM8 (MCM8), found in Bos taurus (Bovine).